We begin with the raw amino-acid sequence, 90 residues long: Cell division protein CrgA (90 aa).

Residues 1–25 (MPKARVTKNETAPVSSNPSANRTPV) are disordered. The segment covering 9 to 22 (NETAPVSSNPSANR) has biased composition (polar residues). The next 2 membrane-spanning stretches (helical) occupy residues 38–58 (VIMF…YLVG) and 67–87 (LGAW…LMTM).

Belongs to the CrgA family.

Its subcellular location is the cell membrane. In terms of biological role, involved in cell division. This Corynebacterium glutamicum (strain R) protein is Cell division protein CrgA.